A 692-amino-acid polypeptide reads, in one-letter code: Elongation factor G (692 aa).

The region spanning 8-282 is the tr-type G domain; it reads EKTRNIGIMA…AVLDYLPAPT (275 aa). GTP is bound by residues 17-24, 81-85, and 135-138; these read AHIDAGKT, DTPGH, and NKMD. 4 positions are modified to phosphoserine: S213, S302, S569, and S680.

This sequence belongs to the TRAFAC class translation factor GTPase superfamily. Classic translation factor GTPase family. EF-G/EF-2 subfamily. Post-translationally, phosphorylated on threonine residue(s). Phosphorylated by PrkC and dephosphorylated by PrpC, in vitro.

The protein localises to the cytoplasm. Catalyzes the GTP-dependent ribosomal translocation step during translation elongation. During this step, the ribosome changes from the pre-translocational (PRE) to the post-translocational (POST) state as the newly formed A-site-bound peptidyl-tRNA and P-site-bound deacylated tRNA move to the P and E sites, respectively. Catalyzes the coordinated movement of the two tRNA molecules, the mRNA and conformational changes in the ribosome. In Bacillus subtilis (strain 168), this protein is Elongation factor G (fusA).